A 305-amino-acid chain; its full sequence is Acetaldehyde dehydrogenase 5 (305 aa).

11–14 (SGNI) is an NAD(+) binding site. The active-site Acyl-thioester intermediate is cysteine 130. Residues 161 to 169 (SIGPGTRAN) and asparagine 272 each bind NAD(+).

It belongs to the acetaldehyde dehydrogenase family.

It catalyses the reaction acetaldehyde + NAD(+) + CoA = acetyl-CoA + NADH + H(+). This chain is Acetaldehyde dehydrogenase 5, found in Dechloromonas aromatica (strain RCB).